A 355-amino-acid chain; its full sequence is Protein RecA (355 aa).

67–74 (GPESSGKT) is an ATP binding site.

Belongs to the RecA family.

The protein resides in the cytoplasm. Its function is as follows. Can catalyze the hydrolysis of ATP in the presence of single-stranded DNA, the ATP-dependent uptake of single-stranded DNA by duplex DNA, and the ATP-dependent hybridization of homologous single-stranded DNAs. It interacts with LexA causing its activation and leading to its autocatalytic cleavage. The sequence is that of Protein RecA from Shewanella baltica (strain OS195).